The chain runs to 214 residues: Charged multivesicular body protein 2b-A (214 aa).

A coiled-coil region spans residues 25–55 (QRAITRDRTALEKQEKQLEMEIKKMAKAGNK). The tract at residues 178-214 (MAKAPSAAKGLPSASASKSTGISDEEIERQLKALGVD) is disordered. The short motif at 202-212 (EEIERQLKALG) is the MIT-interacting motif element.

This sequence belongs to the SNF7 family. In terms of assembly, probable core component of the endosomal sorting required for transport complex III (ESCRT-III). ESCRT-III components are thought to multimerize to form a flat lattice on the perimeter membrane of the endosome.

It is found in the cytoplasm. It localises to the cytosol. The protein resides in the late endosome membrane. In terms of biological role, probable core component of the endosomal sorting required for transport complex III (ESCRT-III) which is involved in multivesicular bodies (MVBs) formation and sorting of endosomal cargo proteins into MVBs. MVBs contain intraluminal vesicles (ILVs) that are generated by invagination and scission from the limiting membrane of the endosome and mostly are delivered to lysosomes enabling degradation of membrane proteins, such as stimulated growth factor receptors, lysosomal enzymes and lipids. This is Charged multivesicular body protein 2b-A (chmp2b-a) from Xenopus laevis (African clawed frog).